A 430-amino-acid polypeptide reads, in one-letter code: Histidinol dehydrogenase (430 aa).

The substrate site is built by S237, Q259, and H262. Zn(2+)-binding residues include Q259 and H262. Active-site proton acceptor residues include E327 and H328. Residues H328, D361, E415, and H420 each coordinate substrate. D361 contacts Zn(2+). H420 contributes to the Zn(2+) binding site.

It belongs to the histidinol dehydrogenase family. It depends on Zn(2+) as a cofactor.

It carries out the reaction L-histidinol + 2 NAD(+) + H2O = L-histidine + 2 NADH + 3 H(+). The protein operates within amino-acid biosynthesis; L-histidine biosynthesis; L-histidine from 5-phospho-alpha-D-ribose 1-diphosphate: step 9/9. Functionally, catalyzes the sequential NAD-dependent oxidations of L-histidinol to L-histidinaldehyde and then to L-histidine. The polypeptide is Histidinol dehydrogenase (Sulfurimonas denitrificans (strain ATCC 33889 / DSM 1251) (Thiomicrospira denitrificans (strain ATCC 33889 / DSM 1251))).